Consider the following 309-residue polypeptide: Homoserine O-succinyltransferase (309 aa).

Residue cysteine 142 is the Acyl-thioester intermediate of the active site. Residues lysine 163 and serine 192 each contribute to the substrate site. Histidine 235 acts as the Proton acceptor in catalysis. Residue glutamate 237 is part of the active site. Substrate is bound at residue arginine 249.

It belongs to the MetA family. In terms of assembly, homodimer.

The protein localises to the cytoplasm. The enzyme catalyses L-homoserine + succinyl-CoA = O-succinyl-L-homoserine + CoA. Its pathway is amino-acid biosynthesis; L-methionine biosynthesis via de novo pathway; O-succinyl-L-homoserine from L-homoserine: step 1/1. In terms of biological role, transfers a succinyl group from succinyl-CoA to L-homoserine, forming succinyl-L-homoserine. In Escherichia coli O17:K52:H18 (strain UMN026 / ExPEC), this protein is Homoserine O-succinyltransferase.